The primary structure comprises 168 residues: Peptide deformylase 1 (168 aa).

The Fe cation site is built by Cys91 and His133. The active site involves Glu134. His137 provides a ligand contact to Fe cation.

It belongs to the polypeptide deformylase family. Requires Fe(2+) as cofactor.

It catalyses the reaction N-terminal N-formyl-L-methionyl-[peptide] + H2O = N-terminal L-methionyl-[peptide] + formate. Functionally, removes the formyl group from the N-terminal Met of newly synthesized proteins. Requires at least a dipeptide for an efficient rate of reaction. N-terminal L-methionine is a prerequisite for activity but the enzyme has broad specificity at other positions. The chain is Peptide deformylase 1 from Vibrio vulnificus (strain YJ016).